Reading from the N-terminus, the 130-residue chain is DNA-binding protein HU (130 aa).

Belongs to the bacterial histone-like protein family.

In terms of biological role, histone-like DNA-binding protein which is capable of wrapping DNA to stabilize it, and thus to prevent its denaturation under extreme environmental conditions. This is DNA-binding protein HU (hup) from Ureaplasma parvum serovar 3 (strain ATCC 700970).